Reading from the N-terminus, the 1339-residue chain is Astrotactin-2 (1339 aa).

Positions 1 to 49 are cleaved as a signal peptide; it reads MAAAGARLSPGPGSGLRGRPRLCFHPGPPPLLPLLLLFLLLLPPPPLLA. Over 50–206 the chain is Lumenal; sequence GATAAASREP…IVEEQMHILH (157 aa). Asparagine 168 carries an N-linked (GlcNAc...) asparagine glycan. A helical membrane pass occupies residues 207 to 227; that stretch reads ISVMGGLIALLLLLLVFTVAL. The Cytoplasmic segment spans residues 228-434; it reads YAQRRWQKRR…KGLLKSPVNK (207 aa). Disordered regions lie at residues 296-316 and 363-408; these read EEDEEPPRRANHVSREDEFGS and TPIE…ADDE. The helical transmembrane segment at 435-455 threads the bilayer; it reads TALTLIAVSSCILAMVCGSQM. Topologically, residues 456–1339 are lumenal; the sequence is SCPLTVKVTL…RNTYGESKGR (884 aa). 3 consecutive EGF-like domains span residues 510 to 550, 651 to 695, and 699 to 751; these read VRDL…HLCV, PVRD…SGCY, and KGID…KSCL. Cystine bridges form between cysteine 514-cysteine 526, cysteine 522-cysteine 533, cysteine 535-cysteine 549, cysteine 655-cysteine 668, cysteine 662-cysteine 679, cysteine 681-cysteine 694, cysteine 703-cysteine 715, cysteine 711-cysteine 735, and cysteine 737-cysteine 750. Asparagine 770 and asparagine 783 each carry an N-linked (GlcNAc...) asparagine glycan. Intrachain disulfides connect cysteine 825-cysteine 987, cysteine 916-cysteine 977, and cysteine 983-cysteine 990. Asparagine 1020 is a glycosylation site (N-linked (GlcNAc...) asparagine). Disulfide bonds link cysteine 1036-cysteine 1047, cysteine 1049-cysteine 1062, cysteine 1136-cysteine 1158, cysteine 1190-cysteine 1277, and cysteine 1298-cysteine 1321. The region spanning 1065 to 1188 is the Fibronectin type-III domain; sequence LLQPVLRLSP…SELSTVTLRT (124 aa).

The protein belongs to the astrotactin family. In terms of assembly, interacts with ASTN1; the interaction is not calcium-dependent.

The protein localises to the membrane. It localises to the perikaryon. It is found in the cytoplasm. Its subcellular location is the cell cortex. The protein resides in the early endosome. The protein localises to the late endosome. It localises to the cytoplasmic vesicle. It is found in the clathrin-coated vesicle. Mediates recycling of the neuronal cell adhesion molecule ASTN1 to the anterior pole of the cell membrane in migrating neurons. Promotes ASTN1 internalization and intracellular transport of endocytosed ASTN1. Selectively binds inositol-4,5-bisphosphate, inositol-3,4,5-trisphosphate and inositol-1,3,4,5-tetrakisphosphate, suggesting it is recruited to membranes that contain lipids with a phosphoinositide headgroup. This Homo sapiens (Human) protein is Astrotactin-2 (ASTN2).